Here is a 308-residue protein sequence, read N- to C-terminus: MDPEVSLLLLCPLGGLSQEQVAVELSPAHDRRPLPGGDKAITAIWETRQQAQPWIFDAPKFRLHSATLVSSSPEPQLLLHLGLTSYRDFLGTNWSSSASWLRQQGAADWGDKQAYLADPLGVGAALVTADDFLVFLRRSQQVAEAPGLVDVPGGHPEPQALCSGGIPRHKDLPGLLVVRELFSSVLQEICDEVNLPLHTLSQPLLLGIACNETSAGRASAEFYVQCSLTSEEVRSYYLSGGPEAHESTGIIFVETQRVQRLQETEMWAQLCPSAKGAILLYNRHPPLQSGVGKSHLSHPSAPALSLQL.

The substrate site is built by Phe56, Tyr86, Arg138, Ala143, Asp150, His155, and Glu157. The Nudix hydrolase domain occupies 117-284; sequence ADPLGVGAAL…KGAILLYNRH (168 aa). Positions 174 to 195 match the Nudix box motif; the sequence is GLLVVRELFSSVLQEICDEVNL. Mg(2+) contacts are provided by Glu188 and Glu192. Ser273 provides a ligand contact to substrate.

This sequence belongs to the Nudix hydrolase family. Requires Mg(2+) as cofactor.

It carries out the reaction UDP-sugar + H2O = UMP + alpha-D-aldose 1-phosphate.. Hydrolyzes UDP-glucose to glucose 1-phosphate and UMP and UDP-galactose to galactose 1-phosphate and UMP. Preferred substrate is UDP-glucose. The chain is Uridine diphosphate glucose pyrophosphatase NUDT22 (Nudt22) from Mus musculus (Mouse).